A 92-amino-acid polypeptide reads, in one-letter code: DNA-directed RNA polymerase subunit omega (92 aa).

Belongs to the RNA polymerase subunit omega family. As to quaternary structure, the RNAP catalytic core consists of 2 alpha, 1 beta, 1 beta' and 1 omega subunit. When a sigma factor is associated with the core the holoenzyme is formed, which can initiate transcription.

It catalyses the reaction RNA(n) + a ribonucleoside 5'-triphosphate = RNA(n+1) + diphosphate. In terms of biological role, promotes RNA polymerase assembly. Latches the N- and C-terminal regions of the beta' subunit thereby facilitating its interaction with the beta and alpha subunits. This is DNA-directed RNA polymerase subunit omega from Shewanella frigidimarina (strain NCIMB 400).